The chain runs to 475 residues: Ribulose bisphosphate carboxylase large chain (475 aa).

Positions 1–2 are excised as a propeptide; sequence MS. Pro3 carries the post-translational modification N-acetylproline. An N6,N6,N6-trimethyllysine modification is found at Lys14. Substrate-binding residues include Asn123 and Thr173. Lys175 acts as the Proton acceptor in catalysis. Lys177 contacts substrate. Residues Lys201, Asp203, and Glu204 each coordinate Mg(2+). At Lys201 the chain carries N6-carboxylysine. His294 acts as the Proton acceptor in catalysis. Positions 295, 327, and 379 each coordinate substrate.

It belongs to the RuBisCO large chain family. Type I subfamily. As to quaternary structure, heterohexadecamer of 8 large chains and 8 small chains; disulfide-linked. The disulfide link is formed within the large subunit homodimers. Mg(2+) serves as cofactor. The disulfide bond which can form in the large chain dimeric partners within the hexadecamer appears to be associated with oxidative stress and protein turnover.

The protein resides in the plastid. It is found in the chloroplast. It catalyses the reaction 2 (2R)-3-phosphoglycerate + 2 H(+) = D-ribulose 1,5-bisphosphate + CO2 + H2O. It carries out the reaction D-ribulose 1,5-bisphosphate + O2 = 2-phosphoglycolate + (2R)-3-phosphoglycerate + 2 H(+). Its function is as follows. RuBisCO catalyzes two reactions: the carboxylation of D-ribulose 1,5-bisphosphate, the primary event in carbon dioxide fixation, as well as the oxidative fragmentation of the pentose substrate in the photorespiration process. Both reactions occur simultaneously and in competition at the same active site. The protein is Ribulose bisphosphate carboxylase large chain of Eucalyptus globulus subsp. globulus (Tasmanian blue gum).